A 387-amino-acid polypeptide reads, in one-letter code: Sedoheptulose-1,7-bisphosphatase, chloroplastic (387 aa).

Cys-109 and Cys-114 are oxidised to a cystine. Mg(2+) is bound by residues Asp-120, Glu-149, Asp-170, Leu-172, and Asp-173. Residues 173-176, Tyr-284, and Lys-314 contribute to the substrate site; that span reads DGSS. Glu-320 contributes to the Mg(2+) binding site.

The protein belongs to the FBPase class 1 family. Homodimer. It depends on Mg(2+) as a cofactor.

Its subcellular location is the plastid. It localises to the chloroplast. It catalyses the reaction D-sedoheptulose 1,7-bisphosphate + H2O = D-sedoheptulose 7-phosphate + phosphate. It participates in carbohydrate biosynthesis; Calvin cycle. This chain is Sedoheptulose-1,7-bisphosphatase, chloroplastic, found in Spinacia oleracea (Spinach).